A 163-amino-acid chain; its full sequence is Probable ribosome biogenesis protein RLP24 (163 aa).

The protein belongs to the eukaryotic ribosomal protein eL24 family. In terms of assembly, associated with nucleolar and cytoplasmic pre-60S particles. At the end of biogenesis it dissociates from cytoplasmic pre-60S particles and is likely to be exchanged for its ribosomal homolog, RPL24.

Its subcellular location is the nucleus. The protein localises to the nucleolus. Its function is as follows. Involved in the biogenesis of the 60S ribosomal subunit. Ensures the docking of GTPBP4/NOG1 to pre-60S particles. The polypeptide is Probable ribosome biogenesis protein RLP24 (RSL24D1) (Bos taurus (Bovine)).